Reading from the N-terminus, the 133-residue chain is Ribonuclease P protein component (133 aa).

Belongs to the RnpA family. Consists of a catalytic RNA component (M1 or rnpB) and a protein subunit.

The catalysed reaction is Endonucleolytic cleavage of RNA, removing 5'-extranucleotides from tRNA precursor.. RNaseP catalyzes the removal of the 5'-leader sequence from pre-tRNA to produce the mature 5'-terminus. It can also cleave other RNA substrates such as 4.5S RNA. The protein component plays an auxiliary but essential role in vivo by binding to the 5'-leader sequence and broadening the substrate specificity of the ribozyme. This Paramagnetospirillum magneticum (strain ATCC 700264 / AMB-1) (Magnetospirillum magneticum) protein is Ribonuclease P protein component.